We begin with the raw amino-acid sequence, 229 residues long: Small ribosomal subunit protein uS3 (229 aa).

The KH type-2 domain maps to 18–87 (IDEYLAKQYY…NPQITITNVE (70 aa)).

Belongs to the universal ribosomal protein uS3 family. In terms of assembly, part of the 30S ribosomal subunit.

Binds the lower part of the 30S subunit head. The polypeptide is Small ribosomal subunit protein uS3 (Saccharolobus solfataricus (strain ATCC 35092 / DSM 1617 / JCM 11322 / P2) (Sulfolobus solfataricus)).